Here is a 90-residue protein sequence, read N- to C-terminus: U7-theraphotoxin-Hhn1k (90 aa).

The first 19 residues, 1–19, serve as a signal peptide directing secretion; sequence MKTAIFTVVLALAVFAVLS. Positions 20-50 are excised as a propeptide; sequence FGWEANEKALSEEFTELIHEKEAASETEARE. 2 disulfides stabilise this stretch: Cys-51–Cys-65 and Cys-58–Cys-70.

Belongs to the neurotoxin 10 (Hwtx-1) family. 13 (Hntx-13) subfamily. As to expression, expressed by the venom gland.

It is found in the secreted. Its function is as follows. Ion channel inhibitor. This is U7-theraphotoxin-Hhn1k from Cyriopagopus hainanus (Chinese bird spider).